Reading from the N-terminus, the 226-residue chain is uncharacterized protein (226 aa).

This sequence belongs to the IIV-6 350L family.

This is an uncharacterized protein from Invertebrate iridescent virus 3 (IIV-3).